The following is a 229-amino-acid chain: uncharacterized protein (229 aa).

The signal sequence occupies residues 1-26 (MSRNDARYLRCTAALGAAFFACGAAA).

It belongs to the OmpW/AlkL family.

The protein resides in the cell outer membrane. This is an uncharacterized protein from Sinorhizobium fredii (strain NBRC 101917 / NGR234).